The sequence spans 63 residues: Beta-insect depressant toxin Im-3 (63 aa).

An LCN-type CS-alpha/beta domain is found at 1–63 (KEGYGVGKDG…KVWESSTNTC (63 aa)). 4 disulfide bridges follow: Cys-11–Cys-63, Cys-15–Cys-37, Cys-22–Cys-44, and Cys-26–Cys-46.

The protein belongs to the long (4 C-C) scorpion toxin superfamily. Sodium channel inhibitor family. Beta subfamily. As to expression, expressed by the venom gland.

It is found in the secreted. Functionally, beta toxins bind voltage-independently at site-4 of sodium channels (Nav) and shift the voltage of activation toward more negative potentials thereby affecting sodium channel activation and promoting spontaneous and repetitive firing. Induces paralysis in cricket A.domestica but does not induce death. The sequence is that of Beta-insect depressant toxin Im-3 from Isometrus maculatus (Lesser brown scorpion).